The primary structure comprises 418 residues: Gamma-glutamyl phosphate reductase (418 aa).

The protein belongs to the gamma-glutamyl phosphate reductase family.

The protein resides in the cytoplasm. It catalyses the reaction L-glutamate 5-semialdehyde + phosphate + NADP(+) = L-glutamyl 5-phosphate + NADPH + H(+). The protein operates within amino-acid biosynthesis; L-proline biosynthesis; L-glutamate 5-semialdehyde from L-glutamate: step 2/2. Catalyzes the NADPH-dependent reduction of L-glutamate 5-phosphate into L-glutamate 5-semialdehyde and phosphate. The product spontaneously undergoes cyclization to form 1-pyrroline-5-carboxylate. This chain is Gamma-glutamyl phosphate reductase, found in Thermodesulfovibrio yellowstonii (strain ATCC 51303 / DSM 11347 / YP87).